The primary structure comprises 366 residues: E3 ubiquitin-protein ligase SINA-like 1 (366 aa).

Residues 1 to 37 are disordered; sequence MVKGTNAEQALAREEASSSRPKRQRVPSIVEEEGENG. The RING-type; degenerate zinc finger occupies 56–92; that stretch reads CPICCNALTIPIFQCDKGHIACSSCCTNVSNKCPYCS. The segment at 106-354 is SBD; the sequence is VVEAFIVRCP…KGTYICIRSL (249 aa). Residues 109–232 form an SIAH-type; degenerate zinc finger; sequence AFIVRCPIVA…LYSHYAANHK (124 aa). Cys114, Cys186, His198, Cys202, Cys209, Cys214, His226, and His231 together coordinate Zn(2+).

This sequence belongs to the SINA (Seven in absentia) family.

The enzyme catalyses S-ubiquitinyl-[E2 ubiquitin-conjugating enzyme]-L-cysteine + [acceptor protein]-L-lysine = [E2 ubiquitin-conjugating enzyme]-L-cysteine + N(6)-ubiquitinyl-[acceptor protein]-L-lysine.. The protein operates within protein modification; protein ubiquitination. In terms of biological role, E3 ubiquitin-protein ligase that mediates ubiquitination and subsequent proteasomal degradation of target proteins. E3 ubiquitin ligases accept ubiquitin from an E2 ubiquitin-conjugating enzyme in the form of a thioester and then directly transfers the ubiquitin to targeted substrates. It probably triggers the ubiquitin-mediated degradation of different substrates. This Arabidopsis thaliana (Mouse-ear cress) protein is E3 ubiquitin-protein ligase SINA-like 1.